The sequence spans 147 residues: Large ribosomal subunit protein uL11 (147 aa).

Belongs to the universal ribosomal protein uL11 family. In terms of assembly, part of the ribosomal stalk of the 50S ribosomal subunit. Interacts with L10 and the large rRNA to form the base of the stalk. L10 forms an elongated spine to which L12 dimers bind in a sequential fashion forming a multimeric L10(L12)X complex. Post-translationally, one or more lysine residues are methylated.

Forms part of the ribosomal stalk which helps the ribosome interact with GTP-bound translation factors. The sequence is that of Large ribosomal subunit protein uL11 from Metamycoplasma arthritidis (strain 158L3-1) (Mycoplasma arthritidis).